The following is a 239-amino-acid chain: Leucyl/phenylalanyl-tRNA--protein transferase (239 aa).

This sequence belongs to the L/F-transferase family.

Its subcellular location is the cytoplasm. The enzyme catalyses N-terminal L-lysyl-[protein] + L-leucyl-tRNA(Leu) = N-terminal L-leucyl-L-lysyl-[protein] + tRNA(Leu) + H(+). It catalyses the reaction N-terminal L-arginyl-[protein] + L-leucyl-tRNA(Leu) = N-terminal L-leucyl-L-arginyl-[protein] + tRNA(Leu) + H(+). It carries out the reaction L-phenylalanyl-tRNA(Phe) + an N-terminal L-alpha-aminoacyl-[protein] = an N-terminal L-phenylalanyl-L-alpha-aminoacyl-[protein] + tRNA(Phe). Functions in the N-end rule pathway of protein degradation where it conjugates Leu, Phe and, less efficiently, Met from aminoacyl-tRNAs to the N-termini of proteins containing an N-terminal arginine or lysine. The protein is Leucyl/phenylalanyl-tRNA--protein transferase of Syntrophus aciditrophicus (strain SB).